The primary structure comprises 218 residues: Octanoyltransferase (218 aa).

The 183-residue stretch at 32 to 214 (ALTPDEIWLV…HFTQLLGYND (183 aa)) folds into the BPL/LPL catalytic domain. Residues 71 to 78 (RGGQITYH), 143 to 145 (SLG), and 156 to 158 (GLA) each bind substrate. Cys174 functions as the Acyl-thioester intermediate in the catalytic mechanism.

The protein belongs to the LipB family.

The protein localises to the cytoplasm. It carries out the reaction octanoyl-[ACP] + L-lysyl-[protein] = N(6)-octanoyl-L-lysyl-[protein] + holo-[ACP] + H(+). The protein operates within protein modification; protein lipoylation via endogenous pathway; protein N(6)-(lipoyl)lysine from octanoyl-[acyl-carrier-protein]: step 1/2. In terms of biological role, catalyzes the transfer of endogenously produced octanoic acid from octanoyl-acyl-carrier-protein onto the lipoyl domains of lipoate-dependent enzymes. Lipoyl-ACP can also act as a substrate although octanoyl-ACP is likely to be the physiological substrate. This chain is Octanoyltransferase, found in Histophilus somni (strain 129Pt) (Haemophilus somnus).